A 377-amino-acid polypeptide reads, in one-letter code: Succinyl-diaminopimelate desuccinylase (377 aa).

Zn(2+) is bound at residue His66. Asp68 is a catalytic residue. Residue Asp99 coordinates Zn(2+). Catalysis depends on Glu133, which acts as the Proton acceptor. Positions 134, 162, and 348 each coordinate Zn(2+).

The protein belongs to the peptidase M20A family. DapE subfamily. In terms of assembly, homodimer. Zn(2+) is required as a cofactor. It depends on Co(2+) as a cofactor.

The enzyme catalyses N-succinyl-(2S,6S)-2,6-diaminopimelate + H2O = (2S,6S)-2,6-diaminopimelate + succinate. It functions in the pathway amino-acid biosynthesis; L-lysine biosynthesis via DAP pathway; LL-2,6-diaminopimelate from (S)-tetrahydrodipicolinate (succinylase route): step 3/3. In terms of biological role, catalyzes the hydrolysis of N-succinyl-L,L-diaminopimelic acid (SDAP), forming succinate and LL-2,6-diaminopimelate (DAP), an intermediate involved in the bacterial biosynthesis of lysine and meso-diaminopimelic acid, an essential component of bacterial cell walls. The polypeptide is Succinyl-diaminopimelate desuccinylase (Alcanivorax borkumensis (strain ATCC 700651 / DSM 11573 / NCIMB 13689 / SK2)).